Reading from the N-terminus, the 137-residue chain is Large ribosomal subunit protein uL24 (137 aa).

The protein belongs to the universal ribosomal protein uL24 family. As to quaternary structure, part of the 50S ribosomal subunit.

In terms of biological role, one of two assembly initiator proteins, it binds directly to the 5'-end of the 23S rRNA, where it nucleates assembly of the 50S subunit. Functionally, located at the polypeptide exit tunnel on the outside of the subunit. This Sulfurisphaera tokodaii (strain DSM 16993 / JCM 10545 / NBRC 100140 / 7) (Sulfolobus tokodaii) protein is Large ribosomal subunit protein uL24.